The primary structure comprises 921 residues: Translation initiation factor IF-2 (921 aa).

Disordered regions lie at residues 81–118, 175–194, and 219–301; these read AVAE…AAAP, PVVE…ANQA, and VAPA…KKHE. The span at 96 to 112 shows a compositional bias: pro residues; it reads PAAPTPPEVPAAAPAPP. The span at 229–241 shows a compositional bias: low complexity; it reads RPSPAAGAPSRGA. Over residues 292–301 the composition is skewed to basic and acidic residues; sequence KKKEQPKKHE. Residues 421–590 enclose the tr-type G domain; it reads KRPPVVTIMG…LLQADLMELK (170 aa). The segment at 430–437 is G1; that stretch reads GHVDHGKT. 430–437 serves as a coordination point for GTP; the sequence is GHVDHGKT. The interval 455–459 is G2; it reads GITQH. Residues 476 to 479 are G3; sequence DTPG. GTP contacts are provided by residues 476–480 and 530–533; these read DTPGH and NKID. The tract at residues 530–533 is G4; it reads NKID. A G5 region spans residues 566–568; it reads SAK.

It belongs to the TRAFAC class translation factor GTPase superfamily. Classic translation factor GTPase family. IF-2 subfamily.

It localises to the cytoplasm. One of the essential components for the initiation of protein synthesis. Protects formylmethionyl-tRNA from spontaneous hydrolysis and promotes its binding to the 30S ribosomal subunits. Also involved in the hydrolysis of GTP during the formation of the 70S ribosomal complex. The chain is Translation initiation factor IF-2 from Pelobacter propionicus (strain DSM 2379 / NBRC 103807 / OttBd1).